The sequence spans 414 residues: Histidine--tRNA ligase (414 aa).

Belongs to the class-II aminoacyl-tRNA synthetase family. As to quaternary structure, homodimer.

It localises to the cytoplasm. The catalysed reaction is tRNA(His) + L-histidine + ATP = L-histidyl-tRNA(His) + AMP + diphosphate + H(+). In Anaeromyxobacter sp. (strain K), this protein is Histidine--tRNA ligase.